We begin with the raw amino-acid sequence, 67 residues long: Conotoxin Cal12.1p2 (67 aa).

Residues 1–21 (DLITNSYTRGKPRHVTSWRNL) constitute a propeptide that is removed on maturation.

Post-translationally, contains 4 disulfide bonds. In terms of tissue distribution, expressed by the venom duct.

It is found in the secreted. The sequence is that of Conotoxin Cal12.1p2 from Californiconus californicus (California cone).